We begin with the raw amino-acid sequence, 508 residues long: ADP-ribosylarginine hydrolase CG3568 (508 aa).

12 residues coordinate ADP-D-ribose: R209, G349, G351, G353, V354, W355, W390, D441, N448, E449, G459, and D460.

It carries out the reaction N(omega)-(ADP-D-ribosyl)-L-arginyl-[protein] + H2O = ADP-D-ribose + L-arginyl-[protein]. The enzyme catalyses N(omega)-(ADP-D-ribosyl)-L-arginine + H2O = ADP-D-ribose + L-arginine. In terms of biological role, protein ADP-ribosyl hydrolase that specifically removes mono-ADP-ribosyl modifications from protein arginine residues. In Drosophila melanogaster (Fruit fly), this protein is ADP-ribosylarginine hydrolase CG3568.